A 687-amino-acid chain; its full sequence is Elongation factor G (687 aa).

Residues Asn8–Leu282 form the tr-type G domain. GTP is bound by residues Ala17–Thr24, Asp81–His85, and Asn135–Asp138.

It belongs to the TRAFAC class translation factor GTPase superfamily. Classic translation factor GTPase family. EF-G/EF-2 subfamily.

The protein localises to the cytoplasm. Functionally, catalyzes the GTP-dependent ribosomal translocation step during translation elongation. During this step, the ribosome changes from the pre-translocational (PRE) to the post-translocational (POST) state as the newly formed A-site-bound peptidyl-tRNA and P-site-bound deacylated tRNA move to the P and E sites, respectively. Catalyzes the coordinated movement of the two tRNA molecules, the mRNA and conformational changes in the ribosome. This is Elongation factor G from Clostridium novyi (strain NT).